Here is a 413-residue protein sequence, read N- to C-terminus: Tyrosine--tRNA ligase (413 aa).

Residue Tyr34 participates in L-tyrosine binding. A 'HIGH' region motif is present at residues 39–48; it reads PTSHSLTVGH. Residues Tyr164 and Gln168 each contribute to the L-tyrosine site. The 'KMSKS' region signature appears at 225 to 229; it reads KFGKS. Position 228 (Lys228) interacts with ATP. Positions 347-413 constitute an S4 RNA-binding domain; that stretch reads ILLVDALVQT…GKKNNALIVF (67 aa).

This sequence belongs to the class-I aminoacyl-tRNA synthetase family. TyrS type 1 subfamily. Homodimer.

The protein localises to the cytoplasm. The enzyme catalyses tRNA(Tyr) + L-tyrosine + ATP = L-tyrosyl-tRNA(Tyr) + AMP + diphosphate + H(+). Catalyzes the attachment of tyrosine to tRNA(Tyr) in a two-step reaction: tyrosine is first activated by ATP to form Tyr-AMP and then transferred to the acceptor end of tRNA(Tyr). In Aster yellows witches'-broom phytoplasma (strain AYWB), this protein is Tyrosine--tRNA ligase.